The sequence spans 91 residues: Large ribosomal subunit protein bL27 (91 aa).

This sequence belongs to the bacterial ribosomal protein bL27 family. In terms of assembly, part of the 50S ribosomal subunit. Contacts protein L18.

In terms of biological role, binds the 5S and 23S rRNAs and also the tRNA in the P site. The chain is Large ribosomal subunit protein bL27 (rpmA) from Deinococcus radiodurans (strain ATCC 13939 / DSM 20539 / JCM 16871 / CCUG 27074 / LMG 4051 / NBRC 15346 / NCIMB 9279 / VKM B-1422 / R1).